The chain runs to 122 residues: Large ribosomal subunit protein uL14 (122 aa).

This sequence belongs to the universal ribosomal protein uL14 family. Part of the 50S ribosomal subunit. Forms a cluster with proteins L3 and L19. In the 70S ribosome, L14 and L19 interact and together make contacts with the 16S rRNA in bridges B5 and B8.

Binds to 23S rRNA. Forms part of two intersubunit bridges in the 70S ribosome. This is Large ribosomal subunit protein uL14 from Xylella fastidiosa (strain M23).